The following is a 114-amino-acid chain: Progonadoliberin-2 (114 aa).

The N-terminal stretch at 1-25 is a signal peptide; sequence MASSMLGFLLLLLLLMAAHPGPSEA. Residues 22 to 80 are disordered; it reads PSEAQHWSHGWYPGGKRASNSPQDPQSALRPPAPSAAQTAHSFRSAALASPEDSVPWEG. Position 35 is a glycine amide (Gly35).

It belongs to the GnRH family. As to expression, midbrain.

The protein localises to the secreted. Functionally, stimulates the secretion of gonadotropins; it stimulates the secretion of both luteinizing and follicle-stimulating hormones. The chain is Progonadoliberin-2 (GNRH2) from Tupaia belangeri (Common tree shrew).